A 270-amino-acid chain; its full sequence is Formamidopyrimidine-DNA glycosylase (270 aa).

The active-site Schiff-base intermediate with DNA is the P2. The active-site Proton donor is E3. K58 acts as the Proton donor; for beta-elimination activity in catalysis. The DNA site is built by H91, R110, and R151. Residues 236-270 form an FPG-type zinc finger; sequence FVYGRGGEFCKSCGSTLREIRLGQRASVYCSRCQR. R260 serves as the catalytic Proton donor; for delta-elimination activity.

It belongs to the FPG family. As to quaternary structure, monomer. It depends on Zn(2+) as a cofactor.

The catalysed reaction is Hydrolysis of DNA containing ring-opened 7-methylguanine residues, releasing 2,6-diamino-4-hydroxy-5-(N-methyl)formamidopyrimidine.. It carries out the reaction 2'-deoxyribonucleotide-(2'-deoxyribose 5'-phosphate)-2'-deoxyribonucleotide-DNA = a 3'-end 2'-deoxyribonucleotide-(2,3-dehydro-2,3-deoxyribose 5'-phosphate)-DNA + a 5'-end 5'-phospho-2'-deoxyribonucleoside-DNA + H(+). In terms of biological role, involved in base excision repair of DNA damaged by oxidation or by mutagenic agents. Acts as a DNA glycosylase that recognizes and removes damaged bases. Has a preference for oxidized purines, such as 7,8-dihydro-8-oxoguanine (8-oxoG). Has AP (apurinic/apyrimidinic) lyase activity and introduces nicks in the DNA strand. Cleaves the DNA backbone by beta-delta elimination to generate a single-strand break at the site of the removed base with both 3'- and 5'-phosphates. The chain is Formamidopyrimidine-DNA glycosylase from Stutzerimonas stutzeri (strain A1501) (Pseudomonas stutzeri).